The primary structure comprises 24 residues: Frenatin-4 (24 aa).

Expressed by the skin glands.

The protein resides in the secreted. Functionally, very weak antimicrobial peptide since it does not show activity below 100 ug/ml against Bacillus cereus, Escherichia coli, Leuconostoc mesenteroides, Micrococcus luteus, Pastewella haemolytica, Staphylococcus aureus, Streptococcus faecalis and Streptococcus uberis. This is Frenatin-4 from Nyctimystes infrafrenatus (White-lipped tree frog).